Reading from the N-terminus, the 543-residue chain is Carboxypeptidase Y homolog A (543 aa).

Residues 1-17 form the signal peptide; it reads MRVAASALLAGAASAAV. Positions 18-128 are excised as a propeptide; it reads APQQQILKFP…KLEQFDLRVK (111 aa). Cystine bridges form between Cys-182–Cys-421, Cys-316–Cys-330, Cys-340–Cys-363, Cys-347–Cys-356, and Cys-385–Cys-391. Asn-213 is a glycosylation site (N-linked (GlcNAc...) asparagine). The active site involves Ser-269. Asp-460 is an active-site residue. An N-linked (GlcNAc...) asparagine glycan is attached at Asn-508. His-519 is a catalytic residue.

This sequence belongs to the peptidase S10 family.

The protein resides in the vacuole. It catalyses the reaction Release of a C-terminal amino acid with broad specificity.. In terms of biological role, vacuolar carboxypeptidase involved in degradation of small peptides. Digests preferentially peptides containing an aliphatic or hydrophobic residue in P1' position, as well as methionine, leucine or phenylalanine in P1 position of ester substrate. The chain is Carboxypeptidase Y homolog A (CPYA) from Phaeosphaeria nodorum (strain SN15 / ATCC MYA-4574 / FGSC 10173) (Glume blotch fungus).